The primary structure comprises 855 residues: MASKLSFKRMDSIAETMPDALRQSRYQMKRCFQRYVSKGKRLLKNQQLMEELEKSLDDKVENEKLVEGFLGYIICSTQEAVVLPPFVAFAVRMNPGIWEYVKVHSDDLSVEGITPSEYLKFKETLYDEKWAKDDNSLEVDFGALDLSTPHLTLPSSIGNGLQFVSKFMSSKLGGKPESMKPLLDYLLTLNYRGEKLMINDTIDTVSKLQTALLLAEVFVSGLPKYTPYLKFEQRFQEWGLEKGWGDTAERCKETLNCLSEVLQAPDPTNMEKFFSRVPSIFNIVIFSIHGYFGQEKVLGLPDTGGQVVYILDQVRAMEEELLQRIKQQGLHVTPKILVLTRLIPDAKGTKCNVELEPVENTKYSHILRVPFKTEDGKDLRQWVSRFDIYPYLERYAQNSCAKILDILEGKPDLIIGNYTDGNLVASLLSNKLCVTQGTIAHALEKTKYEDSDVKWREMDQKYHFSCQFTADMISMNTSDFIITSTYQEIAGSKEKPGQYEHHYAFTMPGLCRYATGINVFDPKFNIAAPGADQSIYFPFTQKQKRLTDLHPQIDELLYSKDDTDEHIGYLADRNKPIIFSMARLDKVKNITGLVEWYGQNKKLRDLVNLVVVAGLLDASQSKDREEIEEINKMHNLMDRYQLKGQIRWIKAQTDRVRNGELYRCIADTKGAFVQPALYEAFGLTVIEAMNCGLPTFATNQGGPAEIIIDGVSGFHVNPINGREAGIKIADFFQKCKEDPSYWNKVSTAGLQRIYECYTWKIYATRVLNMGSTYSFWKTLNKEERQAKQRYLQIFYNVQYRNLAKAVARAGDQQARQTTTGVAPSEIVVRPKERKPQTRMQRILTRLAGQKPPVSE.

Residues 279–758 (SIFNIVIFSI…GLQRIYECYT (480 aa)) form a GT-B glycosyltransferase region.

This sequence belongs to the glycosyltransferase 1 family. Plant sucrose synthase subfamily. Predominantly expressed in roots, flowers and immature seeds.

It is found in the cytoplasm. The protein localises to the membrane. It catalyses the reaction an NDP-alpha-D-glucose + D-fructose = a ribonucleoside 5'-diphosphate + sucrose + H(+). Sucrose-cleaving enzyme that provides UDP-glucose and fructose for various metabolic pathways. This Oryza sativa subsp. japonica (Rice) protein is Sucrose synthase 7 (SUS7).